The chain runs to 388 residues: Formate-dependent phosphoribosylglycinamide formyltransferase (388 aa).

N(1)-(5-phospho-beta-D-ribosyl)glycinamide contacts are provided by residues 15-16 (EL) and Glu-75. ATP-binding positions include Arg-107, Lys-148, 153-158 (SSGKGQ), 188-191 (EEFL), and Glu-196. Residues 112-302 (DLAAGELALR…EFELHLRAVL (191 aa)) enclose the ATP-grasp domain. Residues Glu-261 and Glu-273 each contribute to the Mg(2+) site. N(1)-(5-phospho-beta-D-ribosyl)glycinamide-binding positions include Asp-280, Lys-350, and 357–358 (RR).

The protein belongs to the PurK/PurT family. Homodimer.

It catalyses the reaction N(1)-(5-phospho-beta-D-ribosyl)glycinamide + formate + ATP = N(2)-formyl-N(1)-(5-phospho-beta-D-ribosyl)glycinamide + ADP + phosphate + H(+). Its pathway is purine metabolism; IMP biosynthesis via de novo pathway; N(2)-formyl-N(1)-(5-phospho-D-ribosyl)glycinamide from N(1)-(5-phospho-D-ribosyl)glycinamide (formate route): step 1/1. Its function is as follows. Involved in the de novo purine biosynthesis. Catalyzes the transfer of formate to 5-phospho-ribosyl-glycinamide (GAR), producing 5-phospho-ribosyl-N-formylglycinamide (FGAR). Formate is provided by PurU via hydrolysis of 10-formyl-tetrahydrofolate. This chain is Formate-dependent phosphoribosylglycinamide formyltransferase, found in Parasynechococcus marenigrum (strain WH8102).